The chain runs to 209 residues: Ribosomal RNA small subunit methyltransferase G (209 aa).

S-adenosyl-L-methionine-binding positions include G71, F76, 122–123 (AE), and R135.

The protein belongs to the methyltransferase superfamily. RNA methyltransferase RsmG family.

The protein localises to the cytoplasm. In terms of biological role, specifically methylates the N7 position of a guanine in 16S rRNA. This Phocaeicola vulgatus (strain ATCC 8482 / DSM 1447 / JCM 5826 / CCUG 4940 / NBRC 14291 / NCTC 11154) (Bacteroides vulgatus) protein is Ribosomal RNA small subunit methyltransferase G.